The primary structure comprises 129 residues: MIQDTIADMLTRIRNANAMRIYTVCMPMTSVAREIAVILETEGWIDSWKEASVNSLILRLKYRGAKQQPILTGLRRVSRSGCRVYVSAKEVPKVLGGMGTAIISTSKGIMTDREARNHRLGGEVICLIW.

The protein belongs to the universal ribosomal protein uS8 family. Part of the 30S ribosomal subunit.

The protein resides in the plastid. It localises to the chloroplast. Functionally, one of the primary rRNA binding proteins, it binds directly to 16S rRNA central domain where it helps coordinate assembly of the platform of the 30S subunit. This chain is Small ribosomal subunit protein uS8c (rps8), found in Nephroselmis olivacea (Green alga).